A 985-amino-acid polypeptide reads, in one-letter code: Lateral signaling target protein 2 homolog (985 aa).

4 disordered regions span residues 310-453 (PLGS…ETDE), 498-520 (EYGAGEQQRQRHRDGQEDEPSTS), 533-640 (LRLP…SSLS), and 747-892 (DNVF…TTTA). Composition is skewed to low complexity over residues 327 to 348 (HPTTSSNNNNNNGDTTGTTNTH), 384 to 393 (SLSPNSTPTA), and 401 to 422 (PSHSIASTSSSATGSTHPPADW). Over residues 423-453 (SDGDDEDEEDDDDDIEVEEEELDSTDDETDE) the composition is skewed to acidic residues. Phosphoserine is present on residues S537 and S538. 2 stretches are compositionally biased toward basic residues: residues 563 to 589 (VYRHRHSHRHHHRHHHHHHQRHHHHQH) and 596 to 607 (HPHRTTRSGRKR). 2 stretches are compositionally biased toward low complexity: residues 629-640 (ASGDTSAASSLS) and 761-770 (NGNQANASAQ). The segment covering 776–785 (GSIQRNNTVD) has biased composition (polar residues). Phosphoserine is present on S808. A compositionally biased stretch (low complexity) spans 812 to 866 (QESASTSTSSSQLHQEQQQLQIQVQRQRNNSVGSNTPSSASSTSSSSEQNSPVSA). Residues 875–885 (QSNNETQMPSS) show a composition bias toward polar residues. The FYVE-type zinc-finger motif lies at 904–964 (DGKAPRCMSC…VCRECYVREV (61 aa)). Positions 910, 913, 926, 929, 934, 937, 956, and 959 each coordinate Zn(2+).

This sequence belongs to the lst-2 family.

Functionally, negative regulator of epidermal growth factor receptor (EGFR) signaling. The sequence is that of Lateral signaling target protein 2 homolog from Drosophila ananassae (Fruit fly).